A 310-amino-acid chain; its full sequence is Altered inheritance of mitochondria protein 46, mitochondrial (310 aa).

The transit peptide at 1-20 (MRLISKVLVKTNCLEVGMRR) directs the protein to the mitochondrion.

This sequence belongs to the AIM18/AIM46 family.

The protein localises to the mitochondrion. This Saccharomyces cerevisiae (strain YJM789) (Baker's yeast) protein is Altered inheritance of mitochondria protein 46, mitochondrial (AIM46).